A 209-amino-acid polypeptide reads, in one-letter code: MTEFSIGRSEIAGVVLAGGRSQRMGRDKAGAMLGAESLLRHVLTRLSQQVLPVAVNADAAAEDVPVIPDRFRGKAGPLAGIHAAMVYAAGLPGITHVVTVSVDCPFFPADLVARLAAALERQSQIAIAASEGRSHPVFGLWPVTLAADLEAWMVTDEKRRVRDFLLRHDVTEVTFPLHPTRASLLDPFFNINTPDDLAEAERWLEALRA.

GTP is bound by residues 16–18, K28, N56, D69, and D103; that span reads LAG. D103 is a binding site for Mg(2+).

This sequence belongs to the MobA family. Monomer. It depends on Mg(2+) as a cofactor.

It is found in the cytoplasm. It catalyses the reaction Mo-molybdopterin + GTP + H(+) = Mo-molybdopterin guanine dinucleotide + diphosphate. Its function is as follows. Transfers a GMP moiety from GTP to Mo-molybdopterin (Mo-MPT) cofactor (Moco or molybdenum cofactor) to form Mo-molybdopterin guanine dinucleotide (Mo-MGD) cofactor. This is Molybdenum cofactor guanylyltransferase from Rhizobium leguminosarum bv. trifolii (strain WSM2304).